Here is a 541-residue protein sequence, read N- to C-terminus: Zinc finger protein 655 (541 aa).

The interval 1 to 22 (MEEVTSQEAAESPRGHFQPLEN) is disordered. 6 consecutive C2H2-type zinc fingers follow at residues 243–265 (YKCDTCGKTFHQASALTRHQRIH), 271–293 (YKCKECEKSFSQSSSLSRHKRIH), 334–356 (YKCGTCERVFSRSVHLTQHQRTH), 361–383 (CKCTVCGSDFCHTSYLVEHQRLH), 411–433 (YSCNECGKDFRLNSHLIQHQRIH), and 439–461 (HECNECGKSFSQTSCLIQHHKMH). The C2H2-type 7; degenerate zinc-finger motif lies at 495–517 (FDCDAWEENFSQRAHLIQHERVH).

It belongs to the krueppel C2H2-type zinc-finger protein family. In terms of assembly, interacts with VAV1 and CDK4. Interacts with INTS13; promoting association with the integrator complex.

It localises to the nucleus. Probable transcription factor. This Mus musculus (Mouse) protein is Zinc finger protein 655 (Znf655).